Consider the following 351-residue polypeptide: Probable dual-specificity RNA methyltransferase RlmN (351 aa).

Glu102 acts as the Proton acceptor in catalysis. In terms of domain architecture, Radical SAM core spans 110–339 (DGGRKTICIS…ILNRRSPGKD (230 aa)). Cysteines 117 and 344 form a disulfide. 3 residues coordinate [4Fe-4S] cluster: Cys124, Cys128, and Cys131. Residues 171-172 (GE), Ser203, 226-228 (SLN), and Asn302 each bind S-adenosyl-L-methionine. Residue Cys344 is the S-methylcysteine intermediate of the active site.

It belongs to the radical SAM superfamily. RlmN family. It depends on [4Fe-4S] cluster as a cofactor.

The protein localises to the cytoplasm. It carries out the reaction adenosine(2503) in 23S rRNA + 2 reduced [2Fe-2S]-[ferredoxin] + 2 S-adenosyl-L-methionine = 2-methyladenosine(2503) in 23S rRNA + 5'-deoxyadenosine + L-methionine + 2 oxidized [2Fe-2S]-[ferredoxin] + S-adenosyl-L-homocysteine. The catalysed reaction is adenosine(37) in tRNA + 2 reduced [2Fe-2S]-[ferredoxin] + 2 S-adenosyl-L-methionine = 2-methyladenosine(37) in tRNA + 5'-deoxyadenosine + L-methionine + 2 oxidized [2Fe-2S]-[ferredoxin] + S-adenosyl-L-homocysteine. In terms of biological role, specifically methylates position 2 of adenine 2503 in 23S rRNA and position 2 of adenine 37 in tRNAs. The polypeptide is Probable dual-specificity RNA methyltransferase RlmN (Leptospira borgpetersenii serovar Hardjo-bovis (strain JB197)).